Consider the following 365-residue polypeptide: Forkhead box protein E4 (365 aa).

Residues 1-13 (MDSPDSVRVKCES) are compositionally biased toward basic and acidic residues. Positions 1 to 46 (MDSPDSVRVKCESKGSCSPEEGLNNGLPEEHNQASGGRRRKRPVQR) are disordered. The segment at residues 48–142 (KPPYSYIALI…DNGSFLRRRK (95 aa)) is a DNA-binding region (fork-head).

In terms of tissue distribution, first expressed at the end of gastrulation (stage 13) in the anterior ectodermal placode. During intermediate neural plate stages (stages 14-16), expression expands to the presumptive nasal ectoderm (PNE) and the presumptive lens ectoderm (PLE). By stages 18-21, expression begins to deplete in the PNE, while intensifying in the PLE so that by late neural stages (stages 22), expression is restricted to the PLE. Throughout tailbud stages (stage 23-31), expression is maintained in the lens placode and lens vesicle. In the maturing lens (stage 32-onwards), expression is restricted to the anterior lens epithelium, where it remains during the tadpole stage. In tadpoles there is additional expression in the ventral midline of the pharynx. Expression continues in the adult eye.

The protein localises to the nucleus. Functionally, probable transcription factor. Mediates lens formation in the embryo by promoting the proliferation of the specified lens ectoderm and suppressing its terminal differentiation. This chain is Forkhead box protein E4, found in Xenopus laevis (African clawed frog).